The primary structure comprises 425 residues: UDP-N-acetylglucosamine 1-carboxyvinyltransferase (425 aa).

Residue 23–24 (KN) participates in phosphoenolpyruvate binding. Arg-100 is a binding site for UDP-N-acetyl-alpha-D-glucosamine. Cys-124 acts as the Proton donor in catalysis. Cys-124 is modified (2-(S-cysteinyl)pyruvic acid O-phosphothioketal). UDP-N-acetyl-alpha-D-glucosamine-binding residues include Asp-313 and Ile-335.

This sequence belongs to the EPSP synthase family. MurA subfamily.

It localises to the cytoplasm. The catalysed reaction is phosphoenolpyruvate + UDP-N-acetyl-alpha-D-glucosamine = UDP-N-acetyl-3-O-(1-carboxyvinyl)-alpha-D-glucosamine + phosphate. It participates in cell wall biogenesis; peptidoglycan biosynthesis. Functionally, cell wall formation. Adds enolpyruvyl to UDP-N-acetylglucosamine. This chain is UDP-N-acetylglucosamine 1-carboxyvinyltransferase, found in Wolbachia sp. subsp. Drosophila simulans (strain wRi).